A 335-amino-acid chain; its full sequence is Ficolin-1 (335 aa).

The signal sequence occupies residues 1 to 17 (MWWPMLWAFPVLLCLCS). The tract at residues 47 to 114 (SCPSFPGPPG…TASPLGQKEL (68 aa)) is disordered. The region spanning 50-88 (SFPGPPGPKGEPGSPAGRGERGLQGSPGKMGPPGSKGEP) is the Collagen-like domain. Over residues 75-88 (SPGKMGPPGSKGEP) the composition is skewed to low complexity. One can recognise a Fibrinogen C-terminal domain in the interval 117–335 (ALCRRGPRSC…KVAEMKIRAS (219 aa)). 2 disulfide bridges follow: cysteine 119-cysteine 147 and cysteine 126-cysteine 154. Residues 123 to 162 (PRSCKDLLTRGIFLTGWYTIYLPDCRPLTVLCDMDVDGGG) form an a domain; contributes to trimerization region. The interval 163-251 (WTVFQRRVDG…LTLGQFLEGT (89 aa)) is b domain; contributes to trimerization. Position 270 (aspartate 270) interacts with Ca(2+). The N-linked (GlcNAc...) asparagine glycan is linked to asparagine 271. Aspartate 272 is a Ca(2+) binding site. A disulfide bridge connects residues cysteine 279 and cysteine 292. 291–293 (DCH) lines the a carbohydrate pocket. Residues 326-335 (KVAEMKIRAS) are p domain.

The protein belongs to the ficolin lectin family. As to quaternary structure, homotrimer. Interacts with elastin/ELN. Interacts (via Fibrinogen C-terminal domain) with FFAR2. Interacts with CRP; may regulate monocyte activation by FCN1.

It is found in the secreted. Its subcellular location is the cell membrane. Extracellular lectin functioning as a pattern-recognition receptor in innate immunity. Binds the sugar moieties of pathogen-associated molecular patterns (PAMPs) displayed on microbes and activates the lectin pathway of the complement system. May also activate monocytes through a G protein-coupled receptor, FFAR2, inducing the secretion of interleukin-8/IL-8. Binds preferentially to 9-O-acetylated 2-6-linked sialic acid derivatives and to various glycans containing sialic acid engaged in a 2-3 linkage. The sequence is that of Ficolin-1 (Fcn1) from Rattus norvegicus (Rat).